The following is a 490-amino-acid chain: Betaine aldehyde dehydrogenase (490 aa).

3 residues coordinate K(+): T26, I27, and D93. 150–152 contacts NAD(+); sequence GAW. K162 functions as the Charge relay system in the catalytic mechanism. NAD(+) is bound at residue 176–179; sequence KPSE. V180 provides a ligand contact to K(+). 230 to 233 is an NAD(+) binding site; it reads GVAS. L246 provides a ligand contact to K(+). E252 (proton acceptor) is an active-site residue. G254, C286, and E387 together coordinate NAD(+). C286 serves as the catalytic Nucleophile. The residue at position 286 (C286) is a Cysteine sulfenic acid (-SOH). 2 residues coordinate K(+): K457 and G460. E464 acts as the Charge relay system in catalysis.

The protein belongs to the aldehyde dehydrogenase family. In terms of assembly, dimer of dimers. It depends on K(+) as a cofactor.

The enzyme catalyses betaine aldehyde + NAD(+) + H2O = glycine betaine + NADH + 2 H(+). The protein operates within amine and polyamine biosynthesis; betaine biosynthesis via choline pathway; betaine from betaine aldehyde: step 1/1. Involved in the biosynthesis of the osmoprotectant glycine betaine. Catalyzes the irreversible oxidation of betaine aldehyde to the corresponding acid. The protein is Betaine aldehyde dehydrogenase of Escherichia coli (strain SMS-3-5 / SECEC).